The following is a 503-amino-acid chain: Arabinose import ATP-binding protein AraG 1 (503 aa).

ABC transporter domains follow at residues 5–240 (LRFD…MVGR) and 253–497 (LGDV…LPQG). 37–44 (GENGAGKS) is an ATP binding site.

It belongs to the ABC transporter superfamily. Arabinose importer (TC 3.A.1.2.2) family. The complex is composed of two ATP-binding proteins (AraG), two transmembrane proteins (AraH) and a solute-binding protein (AraF).

It localises to the cell inner membrane. The enzyme catalyses L-arabinose(out) + ATP + H2O = L-arabinose(in) + ADP + phosphate + H(+). Part of the ABC transporter complex AraFGH involved in arabinose import. Responsible for energy coupling to the transport system. This is Arabinose import ATP-binding protein AraG 1 from Burkholderia thailandensis (strain ATCC 700388 / DSM 13276 / CCUG 48851 / CIP 106301 / E264).